Consider the following 195-residue polypeptide: Imidazoleglycerol-phosphate dehydratase (195 aa).

This sequence belongs to the imidazoleglycerol-phosphate dehydratase family.

It is found in the cytoplasm. It carries out the reaction D-erythro-1-(imidazol-4-yl)glycerol 3-phosphate = 3-(imidazol-4-yl)-2-oxopropyl phosphate + H2O. It participates in amino-acid biosynthesis; L-histidine biosynthesis; L-histidine from 5-phospho-alpha-D-ribose 1-diphosphate: step 6/9. This is Imidazoleglycerol-phosphate dehydratase from Jannaschia sp. (strain CCS1).